Here is a 249-residue protein sequence, read N- to C-terminus: Cell division protein FtsQ (249 aa).

Residues 1–6 (MKFILF) lie on the Cytoplasmic side of the membrane. Residues 7–23 (ALLVSAGSWYGWKQLHS) form a helical membrane-spanning segment. Topologically, residues 24 to 249 (QDAVSKPIRY…YKNVMKERRI (226 aa)) are periplasmic. In terms of domain architecture, POTRA spans 29–98 (KPIRYVKIEG…DAVHIKITEQ (70 aa)).

Belongs to the FtsQ/DivIB family. FtsQ subfamily. Part of a complex composed of FtsB, FtsL and FtsQ.

Its subcellular location is the cell inner membrane. Functionally, essential cell division protein. May link together the upstream cell division proteins, which are predominantly cytoplasmic, with the downstream cell division proteins, which are predominantly periplasmic. May control correct divisome assembly. In Methylomonas methanica (strain DSM 25384 / MC09), this protein is Cell division protein FtsQ.